Here is a 729-residue protein sequence, read N- to C-terminus: Fibroblast growth factor receptor homolog 1 (729 aa).

A signal peptide spans 1-36; that stretch reads MAAAWSWRASHSTITMTSGSLVVLFLLLSIWQPAVQ. Over 37–309 the chain is Extracellular; that stretch reads VEGRRQMANS…VASGSLHSTS (273 aa). A disordered region spans residues 56-101; sequence ARSQNKTPAITNNANQSSTSSADLDDGAADDDDNKADLPVNVSSKP. Over residues 66–77 the composition is skewed to low complexity; sequence TNNANQSSTSSA. Asparagine 70 carries N-linked (GlcNAc...) asparagine glycosylation. A compositionally biased stretch (acidic residues) spans 78 to 89; it reads DLDDGAADDDDN. Residues asparagine 96, asparagine 134, asparagine 140, asparagine 171, asparagine 207, asparagine 213, asparagine 242, asparagine 246, and asparagine 282 are each glycosylated (N-linked (GlcNAc...) asparagine). Ig-like C2-type domains lie at 106 to 192 and 203 to 279; these read PKKM…VIVS and TGPL…NSLG. Cysteines 125 and 174 form a disulfide. An intrachain disulfide couples cysteine 220 to cysteine 272. The helical transmembrane segment at 310 to 330 threads the bilayer; that stretch reads FVYIFVFGGLIFIFMTTLFVF. At 331–729 the chain is on the cytoplasmic side; that stretch reads YAIRKMKHEK…TDNLQKWCNY (399 aa). The 277-residue stretch at 416-692 folds into the Protein kinase domain; sequence LVLGATLGEG…EIVEYMDKLL (277 aa). ATP is bound by residues 422–430 and lysine 443; that span reads LGEGAFGRV. Aspartate 556 (proton acceptor) is an active-site residue. Position 587 is a phosphotyrosine; by autocatalysis (tyrosine 587).

It belongs to the protein kinase superfamily. Tyr protein kinase family. Fibroblast growth factor receptor subfamily. In early embryos, expression is specific to mesodermal primordium and invaginated mesodermal cells. At later stages, expression is seen in putative muscle precursor cells and in the CNS.

It localises to the membrane. The catalysed reaction is L-tyrosyl-[protein] + ATP = O-phospho-L-tyrosyl-[protein] + ADP + H(+). May be required for patterning of muscle precursor cells. May be essential for generation of mesodermal and endodermal layers, invaginations of various types of cells and CNS formation. The polypeptide is Fibroblast growth factor receptor homolog 1 (htl) (Drosophila melanogaster (Fruit fly)).